Reading from the N-terminus, the 617-residue chain is Proline--tRNA ligase (617 aa).

The protein belongs to the class-II aminoacyl-tRNA synthetase family. ProS type 1 subfamily. Homodimer.

It localises to the cytoplasm. It catalyses the reaction tRNA(Pro) + L-proline + ATP = L-prolyl-tRNA(Pro) + AMP + diphosphate. Functionally, catalyzes the attachment of proline to tRNA(Pro) in a two-step reaction: proline is first activated by ATP to form Pro-AMP and then transferred to the acceptor end of tRNA(Pro). As ProRS can inadvertently accommodate and process non-cognate amino acids such as alanine and cysteine, to avoid such errors it has two additional distinct editing activities against alanine. One activity is designated as 'pretransfer' editing and involves the tRNA(Pro)-independent hydrolysis of activated Ala-AMP. The other activity is designated 'posttransfer' editing and involves deacylation of mischarged Ala-tRNA(Pro). The misacylated Cys-tRNA(Pro) is not edited by ProRS. This chain is Proline--tRNA ligase, found in Streptococcus agalactiae serotype Ia (strain ATCC 27591 / A909 / CDC SS700).